The following is a 55-amino-acid chain: Protein CADMIUM TOLERANCE 1 (55 aa).

The chain crosses the membrane as a helical span at residues 24 to 40 (GCLYACIFTALCCFCCY).

Belongs to the CYSTM1 family. Expressed in roots and shoots.

The protein resides in the cell membrane. It localises to the secreted. It is found in the cell wall. Confers resistance to heavy metal ions (e.g. cadmium (CdCl(2)) and copper (CuCl(2))) by chelating them at the plasma membrane of root cells, thus stopping their entry and reducing their accumulation. Binds to aluminium (Al). The chain is Protein CADMIUM TOLERANCE 1 from Oryza sativa subsp. japonica (Rice).